Here is a 318-residue protein sequence, read N- to C-terminus: Phosphoenolpyruvate transferase (318 aa).

Position 50 (Asp-50) interacts with 7,8-didemethyl-8-hydroxy-5-deazariboflavin.

It belongs to the CofD family. Homodimer. The cofactor is Mg(2+).

It carries out the reaction enolpyruvoyl-2-diphospho-5'-guanosine + 7,8-didemethyl-8-hydroxy-5-deazariboflavin = dehydro coenzyme F420-0 + GMP + H(+). It participates in cofactor biosynthesis; coenzyme F420 biosynthesis. In terms of biological role, catalyzes the transfer of the phosphoenolpyruvate moiety from enoylpyruvoyl-2-diphospho-5'-guanosine (EPPG) to 7,8-didemethyl-8-hydroxy-5-deazariboflavin (FO) with the formation of dehydro coenzyme F420-0 and GMP. The chain is Phosphoenolpyruvate transferase from Streptomyces griseus subsp. griseus (strain JCM 4626 / CBS 651.72 / NBRC 13350 / KCC S-0626 / ISP 5235).